We begin with the raw amino-acid sequence, 537 residues long: Ribonuclease Y (537 aa).

Residues 4-24 form a helical membrane-spanning segment; the sequence is FPIIMSVFAAIIGLVIGYVSV. The tract at residues 112 to 148 is disordered; that stretch reads ASTLDRKDDNLSNKEKALEQKEQSLSDKSKHIDAREE. Residues 227-287 form the KH domain; it reads TNSTVHLPDD…IRREIARMTM (61 aa). The 94-residue stretch at 353–446 folds into the HD domain; that stretch reads VLRHSIEVAK…VAAADALSAA (94 aa).

It belongs to the RNase Y family.

The protein resides in the cell membrane. In terms of biological role, endoribonuclease that initiates mRNA decay. This chain is Ribonuclease Y, found in Streptococcus sanguinis (strain SK36).